The sequence spans 364 residues: Probable tartrate dehydrogenase/decarboxylase TtuC (364 aa).

Mn(2+) contacts are provided by D222, D246, and D250.

Belongs to the isocitrate and isopropylmalate dehydrogenases family. It depends on Mg(2+) as a cofactor. Requires Mn(2+) as cofactor. K(+) is required as a cofactor.

The protein resides in the cytoplasm. It carries out the reaction tartrate + NAD(+) = 2-hydroxy-3-oxosuccinate + NADH + H(+). The catalysed reaction is (2R,3S)-tartrate + NAD(+) = 2-hydroxy-3-oxosuccinate + NADH + H(+). It catalyses the reaction (2R,3R)-tartrate + NAD(+) = 2-hydroxy-3-oxosuccinate + NADH + H(+). The enzyme catalyses (2R,3R)-tartrate + H(+) = (R)-glycerate + CO2. It carries out the reaction (R)-malate + NAD(+) = pyruvate + CO2 + NADH. The protein operates within carbohydrate acid metabolism; tartrate degradation; 2-hydroxy-3-oxosuccinate from L-tartrate: step 1/1. It functions in the pathway carbohydrate acid metabolism; tartrate degradation; 2-hydroxy-3-oxosuccinate from meso-tartrate: step 1/1. It participates in carbohydrate acid metabolism; tartrate degradation; D-glycerate from L-tartrate: step 1/1. Its function is as follows. Has multiple catalytic activities. Apart from catalyzing the oxidation of (+)-tartrate to oxaloglycolate, also converts meso-tartrate to D-glycerate and catalyzes the oxidative decarboxylation of D-malate to pyruvate. This is Probable tartrate dehydrogenase/decarboxylase TtuC (ttuC) from Agrobacterium vitis (Rhizobium vitis).